Consider the following 130-residue polypeptide: Large ribosomal subunit protein bL20 (130 aa).

It belongs to the bacterial ribosomal protein bL20 family.

Functionally, binds directly to 23S ribosomal RNA and is necessary for the in vitro assembly process of the 50S ribosomal subunit. It is not involved in the protein synthesizing functions of that subunit. The sequence is that of Large ribosomal subunit protein bL20 from Solibacter usitatus (strain Ellin6076).